The chain runs to 1454 residues: Probable cleavage and polyadenylation specificity factor subunit 1 (1454 aa).

Positions 810-843 are disordered; sequence EEKEKKAKQTAAQEKEKETEKKKDDAKNEEDQVN. The segment covering 812-843 has biased composition (basic and acidic residues); that stretch reads KEKKAKQTAAQEKEKETEKKKDDAKNEEDQVN.

The protein belongs to the CPSF1 family. In terms of assembly, CPSF is a heterotetramer composed of four distinct subunits 160 (cpsf-1), 100 (cpsf-2), 70 (cpsf-3), and 30 kDa (cpsf-4).

It is found in the nucleus. Functionally, CPSF plays a key role in pre-mRNA 3'-end formation, recognizing the AAUAAA signal sequence and interacting with poly(A)polymerase and other factors to bring about cleavage and poly(A) addition. This subunit is involved in the RNA recognition step of the polyadenylation reaction. The sequence is that of Probable cleavage and polyadenylation specificity factor subunit 1 from Caenorhabditis briggsae.